The primary structure comprises 166 residues: Large ribosomal subunit protein uL10 (166 aa).

This sequence belongs to the universal ribosomal protein uL10 family. Part of the ribosomal stalk of the 50S ribosomal subunit. The N-terminus interacts with L11 and the large rRNA to form the base of the stalk. The C-terminus forms an elongated spine to which L12 dimers bind in a sequential fashion forming a multimeric L10(L12)X complex.

Forms part of the ribosomal stalk, playing a central role in the interaction of the ribosome with GTP-bound translation factors. The protein is Large ribosomal subunit protein uL10 of Staphylococcus carnosus (strain TM300).